Consider the following 365-residue polypeptide: Chorismate synthase (365 aa).

Position 48 (arginine 48) interacts with NADP(+). Residues 125-127, glycine 286, 301-305, and arginine 328 contribute to the FMN site; these read RGS and KPTPS.

It belongs to the chorismate synthase family. FMNH2 is required as a cofactor.

The enzyme catalyses 5-O-(1-carboxyvinyl)-3-phosphoshikimate = chorismate + phosphate. It participates in metabolic intermediate biosynthesis; chorismate biosynthesis; chorismate from D-erythrose 4-phosphate and phosphoenolpyruvate: step 7/7. Functionally, catalyzes the anti-1,4-elimination of the C-3 phosphate and the C-6 proR hydrogen from 5-enolpyruvylshikimate-3-phosphate (EPSP) to yield chorismate, which is the branch point compound that serves as the starting substrate for the three terminal pathways of aromatic amino acid biosynthesis. This reaction introduces a second double bond into the aromatic ring system. This chain is Chorismate synthase, found in Methanosphaera stadtmanae (strain ATCC 43021 / DSM 3091 / JCM 11832 / MCB-3).